Consider the following 58-residue polypeptide: Alpha-conotoxin-like Pu1.6 (58 aa).

Residues 1 to 17 (MFTVFLLVVLVTTVVFS) form the signal peptide. Positions 18–35 (TSDHRPASNHENRRASKR) are excised as a propeptide. 2 disulfide bridges follow: Cys-44–Cys-50 and Cys-45–Cys-58. The tract at residues 46–48 (TNP) is lacks the Ser-Xaa-Pro motif that is crucial for potent interaction with nAChR.

Belongs to the conotoxin A superfamily. As to expression, expressed by the venom duct.

It localises to the secreted. Its function is as follows. Alpha-conotoxins act on postsynaptic membranes, they bind to the nicotinic acetylcholine receptors (nAChR) and thus inhibit them. Has possibly a distinct nAChR binding mode from other alpha-conotoxins, due to a different three residue motif (lacks the Ser-Xaa-Pro motif). The sequence is that of Alpha-conotoxin-like Pu1.6 from Conus pulicarius (Flea-bitten cone).